Consider the following 215-residue polypeptide: Peptide methionine sulfoxide reductase MsrA (215 aa).

Cys-58 is an active-site residue.

Belongs to the MsrA Met sulfoxide reductase family.

The catalysed reaction is L-methionyl-[protein] + [thioredoxin]-disulfide + H2O = L-methionyl-(S)-S-oxide-[protein] + [thioredoxin]-dithiol. It catalyses the reaction [thioredoxin]-disulfide + L-methionine + H2O = L-methionine (S)-S-oxide + [thioredoxin]-dithiol. Has an important function as a repair enzyme for proteins that have been inactivated by oxidation. Catalyzes the reversible oxidation-reduction of methionine sulfoxide in proteins to methionine. The chain is Peptide methionine sulfoxide reductase MsrA from Pseudomonas aeruginosa (strain UCBPP-PA14).